Reading from the N-terminus, the 305-residue chain is Protein FdhE homolog (305 aa).

This sequence belongs to the FdhE family.

The protein resides in the cytoplasm. Functionally, necessary for formate dehydrogenase activity. This chain is Protein FdhE homolog, found in Haemophilus ducreyi (strain 35000HP / ATCC 700724).